Consider the following 157-residue polypeptide: Transcription elongation factor GreA (157 aa).

Residues 1 to 24 are disordered; it reads MDKFPMTPEGYHALDEELKRRQQE. A compositionally biased stretch (basic and acidic residues) spans 12 to 24; that stretch reads HALDEELKRRQQE. Residues 53-73 adopt a coiled-coil conformation; it reads EAQSLNEGRIAELEDKLSRAE.

Belongs to the GreA/GreB family.

Functionally, necessary for efficient RNA polymerase transcription elongation past template-encoded arresting sites. The arresting sites in DNA have the property of trapping a certain fraction of elongating RNA polymerases that pass through, resulting in locked ternary complexes. Cleavage of the nascent transcript by cleavage factors such as GreA or GreB allows the resumption of elongation from the new 3'terminus. GreA releases sequences of 2 to 3 nucleotides. The protein is Transcription elongation factor GreA of Beijerinckia indica subsp. indica (strain ATCC 9039 / DSM 1715 / NCIMB 8712).